Reading from the N-terminus, the 623-residue chain is (-)-limonene synthase TPS1, chloroplastic (623 aa).

A chloroplast-targeting transit peptide spans 1–60; that stretch reads MQCIAFHQFASSSSLPIWSSIDNRFTPKTSITSISKPKPKLKSKSNLKSRSRSSTCYPIQ. Residues 29–52 are disordered; the sequence is TSITSISKPKPKLKSKSNLKSRSR. The span at 37–51 shows a compositional bias: basic residues; sequence PKPKLKSKSNLKSRS. 5 residues coordinate (2E)-geranyl diphosphate: Arg337, Asp374, Asp378, Arg516, and Asp519. Positions 374 and 378 each coordinate Mg(2+). The DDXXD motif signature appears at 374-378; sequence DDMHD. Mg(2+) contacts are provided by Asp519, Thr523, and Glu527.

This sequence belongs to the terpene synthase family. Tpsb subfamily. Mg(2+) is required as a cofactor. Requires Mn(2+) as cofactor. The cofactor is K(+). As to expression, trichome.

Its subcellular location is the plastid. The protein resides in the chloroplast. It catalyses the reaction (2E)-geranyl diphosphate = (4S)-limonene + diphosphate. It carries out the reaction (2E)-geranyl diphosphate = terpinolene + diphosphate. The catalysed reaction is (2E)-geranyl diphosphate = (1R,5R)-alpha-pinene + diphosphate. The enzyme catalyses (2E)-geranyl diphosphate = (1R,5R)-beta-pinene + diphosphate. It catalyses the reaction (2E)-geranyl diphosphate = beta-myrcene + diphosphate. It carries out the reaction (2E)-geranyl diphosphate = (4R)-limonene + diphosphate. It functions in the pathway secondary metabolite biosynthesis; terpenoid biosynthesis. Its pathway is terpene metabolism; (4S)-limonene biosynthesis; (4S)-limonene from geranyl diphosphate: step 1/1. Its function is as follows. Involved in monoterpene (C10) olefins biosynthesis, constituants of cannabinoids and terpenoids-rich resins. Catalyzes mainly the conversion of (2E)-geranyl diphosphate to (-)-limonene, and also produces minor products such as (+)-limonene, (+)-alpha-pinene, terpinolene, (+)-beta-pinene and beta-myrcene. This chain is (-)-limonene synthase TPS1, chloroplastic, found in Cannabis sativa (Hemp).